Consider the following 575-residue polypeptide: DNA polymerase lambda (575 aa).

Residues 36–132 (EAEEWLSSLR…RLVDVAGFSI (97 aa)) form the BRCT domain. Residues 160–205 (ALLQTALPPPPSPTRPVSPPQKTKEAPNTQAQPISDDEASDGEETQ) are disordered. Residues 166-178 (LPPPPSPTRPVSP) show a composition bias toward pro residues. Residues 194 to 203 (SDDEASDGEE) are compositionally biased toward acidic residues. The DNA-binding stretch occupies residues 265 to 279 (KAYSVQGDKWRALGY). The active-site Schiff-base intermediate with DNA is lysine 312. A DNA-binding region spans residues 345–348 (GTKT). Residues arginine 386, 417 to 420 (SYRR), and 426 to 429 (GDVD) contribute to the dCTP site. The tract at residues 420–429 (RGKATCGDVD) is involved in primer binding. Aspartate 427, aspartate 429, and aspartate 490 together coordinate Mn(2+). Residues 466 to 505 (ENGQQQKYLGVCRLPGPGWRHRRLDIIVVPYSEFACALLY) form a DNA-binding region. Asparagine 513 lines the dCTP pocket.

Belongs to the DNA polymerase type-X family. In terms of assembly, interacts with PCNA. Interacts with PAXX; promoting POLL recruitment to double-strand breaks (DSBs) and stimulation of the end-filling activity of POLL. Interacts with XRCC4; promoting POLL recruitment to double-strand breaks (DSBs) and stimulation of the end-filling activity of POLL. Interacts with NHEJ1/XLF; promoting POLL recruitment to double-strand breaks (DSBs) and stimulation of the end-filling activity of POLL. Requires Mn(2+) as cofactor.

It localises to the nucleus. The catalysed reaction is DNA(n) + a 2'-deoxyribonucleoside 5'-triphosphate = DNA(n+1) + diphosphate. Functionally, DNA polymerase that functions in several pathways of DNA repair. Involved in base excision repair (BER) responsible for repair of lesions that give rise to abasic (AP) sites in DNA. Also contributes to DNA double-strand break repair by non-homologous end joining and homologous recombination. Has both template-dependent and template-independent (terminal transferase) DNA polymerase activities. Also has a 5'-deoxyribose-5-phosphate lyase (dRP lyase) activity. The polypeptide is DNA polymerase lambda (Macaca fascicularis (Crab-eating macaque)).